We begin with the raw amino-acid sequence, 102 residues long: Peptide chaperone MftB (102 aa).

It belongs to the peptide chaperone MftB family.

Peptide chaperone involved in the biosynthesis of the enzyme cofactor mycofactocin (MFT). Binds MftA and MftC with high affinity, and is essential for MftC activity on MftA, likely via the formation of a ternary complex. Is required for the in vivo ethanol assimilation in M.smegmatis. The polypeptide is Peptide chaperone MftB (Mycolicibacterium smegmatis (strain ATCC 700084 / mc(2)155) (Mycobacterium smegmatis)).